A 77-amino-acid chain; its full sequence is Small nuclear ribonucleoprotein G (77 aa).

The Sm domain occupies Ala4–Met76.

Belongs to the snRNP Sm proteins family. As to quaternary structure, belongs to the 40S cdc5-associated complex (or cwf complex), a spliceosome sub-complex reminiscent of a late-stage spliceosome composed of the U2, U5 and U6 snRNAs and at least brr2, cdc5, cwf2/prp3, cwf3/syf1, cwf4/syf3, cwf5/ecm2, spp42/cwf6, cwf7/spf27, cwf8, cwf9, cwf10, cwf11, cwf12, prp45/cwf13, cwf14, cwf15, cwf16, cwf17, cwf18, cwf19, cwf20, cwf21, cwf22, cwf23, cwf24, cwf25, cwf26, cyp7/cwf27, cwf28, cwf29/ist3, lea1, msl1, prp5/cwf1, prp10, prp12/sap130, prp17, prp22, sap61, sap62, sap114, sap145, slu7, smb1, smd1, smd3, smf1, smg1 and syf2.

It is found in the nucleus. It localises to the cytoplasm. Plays a role in pre-mRNA splicing as a core component of the spliceosomal U1, U2, U4 and U5 small nuclear ribonucleoproteins (snRNPs), the building blocks of the spliceosome. This Schizosaccharomyces pombe (strain 972 / ATCC 24843) (Fission yeast) protein is Small nuclear ribonucleoprotein G (smg1).